Reading from the N-terminus, the 483-residue chain is Regulatory protein ViaA (483 aa).

It belongs to the ViaA family. In terms of assembly, homodimer. Interacts with RavA.

The protein localises to the cytoplasm. Its function is as follows. Component of the RavA-ViaA chaperone complex, which may act on the membrane to optimize the function of some of the respiratory chains. ViaA stimulates the ATPase activity of RavA. This Escherichia coli O81 (strain ED1a) protein is Regulatory protein ViaA.